The chain runs to 480 residues: MSQEISYTPDVAELLDFDKKHIWHPYTSLSSPLNVYPVKSAHGCKLVLDTDSPVDVEVIDAMSSWWCVIHGYNNPELNEALTKQMLKFSHVLLGGFTHKGAVNLVQKLLKVIDEPSLQYCFLADSGSVAVEVALKMALQSNMSGEATKNRTKFLTIKNGYHGDTFGAMSVCDPENSMHHIYNDRLSENIFAQAPSIVDGLPTSQNGFEDHWNAEEVTDLKKQFELHSDKICAVILEPILQGAGGLRPYHPQFLIEVQKLCNQYDVLFIMDEIATGFGRTGEIFAFKHCQKYQDQHGISPSDQIKVVPDILCVGKGLTSGYMTMSAVVVNDKVASRISSPNSPTGGCFMHGPTFMGNALACSVAEKSMDILLRGEWRKQVSAIENQIYRELYQYIKNPDNGLIGTVVKRVSVIGAVGIVELYKKTDPEWFQKKFISKGVHIRPFNCLCYIMPPYVITTEELTKVNQVLIEVLHEWKSHINQ.

126-127 is a pyridoxal 5'-phosphate binding site; sequence GS. Tyr160 lines the substrate pocket. Asp270 is a binding site for pyridoxal 5'-phosphate. Position 314 is an N6-(pyridoxal phosphate)lysine (Lys314). A substrate-binding site is contributed by Gly350. Residue 351-352 coordinates pyridoxal 5'-phosphate; sequence PT. Arg441 contacts substrate.

The protein belongs to the class-III pyridoxal-phosphate-dependent aminotransferase family. BioA subfamily. The cofactor is pyridoxal 5'-phosphate.

The enzyme catalyses (8S)-8-amino-7-oxononanoate + S-adenosyl-L-methionine = S-adenosyl-4-methylsulfanyl-2-oxobutanoate + (7R,8S)-7,8-diammoniononanoate. Its pathway is cofactor biosynthesis; biotin biosynthesis; 7,8-diaminononanoate from 8-amino-7-oxononanoate (SAM route): step 1/1. Functionally, catalyzes the transfer of the alpha-amino group from S-adenosyl-L-methionine (SAM) to 7-keto-8-aminopelargonic acid (KAPA) to form 7,8-diaminopelargonic acid (DAPA). It is the only aminotransferase known to utilize SAM as an amino donor. This chain is Adenosylmethionine-8-amino-7-oxononanoate aminotransferase, found in Saccharomyces cerevisiae (strain ATCC 204508 / S288c) (Baker's yeast).